The primary structure comprises 110 residues: Protein RnfH (110 aa).

The disordered stretch occupies residues 86 to 110 (RKRAAQQAKDQEEKKKAEKSANKEN). Basic and acidic residues predominate over residues 94 to 110 (KDQEEKKKAEKSANKEN).

It belongs to the UPF0125 (RnfH) family.

This chain is Protein RnfH, found in Mannheimia succiniciproducens (strain KCTC 0769BP / MBEL55E).